The primary structure comprises 376 residues: Histidinol dehydrogenase (376 aa).

NAD(+)-binding residues include Y100 and N182. Substrate contacts are provided by S205, Q227, and H230. Zn(2+) is bound by residues Q227 and H230. Active-site proton acceptor residues include E275 and H276. Residues H276, D309, E363, and H368 each coordinate substrate. D309 contributes to the Zn(2+) binding site. H368 is a Zn(2+) binding site.

Belongs to the histidinol dehydrogenase family. Requires Zn(2+) as cofactor.

The catalysed reaction is L-histidinol + 2 NAD(+) + H2O = L-histidine + 2 NADH + 3 H(+). It participates in amino-acid biosynthesis; L-histidine biosynthesis; L-histidine from 5-phospho-alpha-D-ribose 1-diphosphate: step 9/9. In terms of biological role, catalyzes the sequential NAD-dependent oxidations of L-histidinol to L-histidinaldehyde and then to L-histidine. This Thermococcus kodakarensis (strain ATCC BAA-918 / JCM 12380 / KOD1) (Pyrococcus kodakaraensis (strain KOD1)) protein is Histidinol dehydrogenase.